Consider the following 330-residue polypeptide: DNA-directed RNA polymerase subunit alpha (330 aa).

Residues 1-237 (MYTEINEMLT…RQLHAFVDMK (237 aa)) are alpha N-terminal domain (alpha-NTD). Residues 251-330 (FDPVLLRSVD…ENWPPASLGE (80 aa)) form an alpha C-terminal domain (alpha-CTD) region.

This sequence belongs to the RNA polymerase alpha chain family. In terms of assembly, homodimer. The RNAP catalytic core consists of 2 alpha, 1 beta, 1 beta' and 1 omega subunit. When a sigma factor is associated with the core the holoenzyme is formed, which can initiate transcription.

The enzyme catalyses RNA(n) + a ribonucleoside 5'-triphosphate = RNA(n+1) + diphosphate. Functionally, DNA-dependent RNA polymerase catalyzes the transcription of DNA into RNA using the four ribonucleoside triphosphates as substrates. The protein is DNA-directed RNA polymerase subunit alpha of Legionella pneumophila (strain Paris).